A 116-amino-acid chain; its full sequence is MSTSELLKHIYDINLSYLLLAQRLINDEKASAMFRLGITDTMADALSQLTLPQMVKLAETNQLVCHFRFSDHNTIHHLTKESRVDDLQQIHTGILLSSHLLHELSLKDDSTPKKRA.

Belongs to the FlhD family. As to quaternary structure, homodimer; disulfide-linked. Forms a heterohexamer composed of two FlhC and four FlhD subunits. Each FlhC binds a FlhD dimer, forming a heterotrimer, and a hexamer assembles by dimerization of two heterotrimers.

The protein resides in the cytoplasm. Its function is as follows. Functions in complex with FlhC as a master transcriptional regulator that regulates transcription of several flagellar and non-flagellar operons by binding to their promoter region. Activates expression of class 2 flagellar genes, including fliA, which is a flagellum-specific sigma factor that turns on the class 3 genes. Also regulates genes whose products function in a variety of physiological pathways. This chain is Flagellar transcriptional regulator FlhD, found in Yersinia pseudotuberculosis serotype O:1b (strain IP 31758).